A 92-amino-acid chain; its full sequence is MRHTRRNIFYHELIGLRIKIIEYPDKSLVGLTGLVIDETQKTLLIETNSGRRVRVLKANGVFQFMLPNKEKVIIRGVQILGRPEDRLKNIVR.

It belongs to the eukaryotic/archaeal RNase P protein component 1 family. As to quaternary structure, consists of a catalytic RNA component and at least 4-5 protein subunits.

The protein resides in the cytoplasm. The enzyme catalyses Endonucleolytic cleavage of RNA, removing 5'-extranucleotides from tRNA precursor.. Part of ribonuclease P, a protein complex that generates mature tRNA molecules by cleaving their 5'-ends. In Staphylothermus marinus (strain ATCC 43588 / DSM 3639 / JCM 9404 / F1), this protein is Ribonuclease P protein component 1.